A 238-amino-acid chain; its full sequence is Fatty acid metabolism regulator protein (238 aa).

Positions 6 to 74 (KGPASFAEKY…HGKPTRVNNF (69 aa)) constitute an HTH gntR-type domain. Positions 34–53 (ERELSELIGVTRTTLREVLQ) form a DNA-binding region, H-T-H motif.

In terms of assembly, homodimer.

It localises to the cytoplasm. Functionally, multifunctional regulator of fatty acid metabolism. This Shewanella putrefaciens (strain CN-32 / ATCC BAA-453) protein is Fatty acid metabolism regulator protein.